The chain runs to 178 residues: METQEVMREIQYEEFEEKIIEIRRTSKVTKGGKNLSFRVVAIVGNKNGKVGLGIGKAREVPEAIRKAIADAKKNVIEVPVINGTIPHEVIGRQDASRVLLKPAAPGTGIIAGGTVRAVVELAGIQNILTKALGSTNPLNLAMATINGLKELLDPRKVAKLRDITVEEVYRGVRREGNA.

An S5 DRBM domain is found at 15–78 (FEEKIIEIRR…ADAKKNVIEV (64 aa)).

The protein belongs to the universal ribosomal protein uS5 family. Part of the 30S ribosomal subunit. Contacts proteins S4 and S8.

Functionally, with S4 and S12 plays an important role in translational accuracy. Its function is as follows. Located at the back of the 30S subunit body where it stabilizes the conformation of the head with respect to the body. The polypeptide is Small ribosomal subunit protein uS5 (Thermotoga neapolitana (strain ATCC 49049 / DSM 4359 / NBRC 107923 / NS-E)).